A 261-amino-acid chain; its full sequence is uncharacterized protein (261 aa).

A divalent metal cation contacts are provided by Asp43, His45, Asp75, Asn106, His197, and His199.

The protein belongs to the metallophosphoesterase superfamily. It depends on a divalent metal cation as a cofactor.

This is an uncharacterized protein from Aquifex aeolicus (strain VF5).